The chain runs to 271 residues: Co-chaperone protein DjlA (271 aa).

Topologically, residues 1-6 (MQYWGK) are periplasmic. Residues 7–31 (IIGVAVALLMGGGFWGVVLGLLIGH) form a helical membrane-spanning segment. The Cytoplasmic portion of the chain corresponds to 32–271 (MFDKARSRKM…ELIKQQKGFK (240 aa)). The 67-residue stretch at 205 to 271 (DACNVLGVKP…ELIKQQKGFK (67 aa)) folds into the J domain.

As to quaternary structure, homodimer.

Its subcellular location is the cell inner membrane. In terms of biological role, regulatory DnaK co-chaperone. Direct interaction between DnaK and DjlA is needed for the induction of the wcaABCDE operon, involved in the synthesis of a colanic acid polysaccharide capsule, possibly through activation of the RcsB/RcsC phosphotransfer signaling pathway. The colanic acid capsule may help the bacterium survive conditions outside the host. The chain is Co-chaperone protein DjlA from Escherichia coli (strain K12).